We begin with the raw amino-acid sequence, 474 residues long: Bifunctional protein GlmU (474 aa).

The interval 1–232 (MSALDVIIMA…ALQVAGVNSP (232 aa)) is pyrophosphorylase. UDP-N-acetyl-alpha-D-glucosamine contacts are provided by residues K23, Q78, 83–84 (GT), 105–107 (SGD), G142, E157, and N230. Residue D107 coordinates Mg(2+). N230 is a binding site for Mg(2+). A linker region spans residues 233–253 (LQLAELERAHQLAQARALMEQ). The N-acetyltransferase stretch occupies residues 254-474 (GVRLADPARF…WQRPAKLPKA (221 aa)). 2 residues coordinate UDP-N-acetyl-alpha-D-glucosamine: R349 and K367. Catalysis depends on H379, which acts as the Proton acceptor. UDP-N-acetyl-alpha-D-glucosamine-binding residues include Y382 and N393. Acetyl-CoA-binding positions include A396, 402–403 (NY), S421, G439, and R456. Positions 454 to 474 (VARGKQVTKENWQRPAKLPKA) are disordered.

In the N-terminal section; belongs to the N-acetylglucosamine-1-phosphate uridyltransferase family. This sequence in the C-terminal section; belongs to the transferase hexapeptide repeat family. As to quaternary structure, homotrimer. Requires Mg(2+) as cofactor.

Its subcellular location is the cytoplasm. The enzyme catalyses alpha-D-glucosamine 1-phosphate + acetyl-CoA = N-acetyl-alpha-D-glucosamine 1-phosphate + CoA + H(+). It carries out the reaction N-acetyl-alpha-D-glucosamine 1-phosphate + UTP + H(+) = UDP-N-acetyl-alpha-D-glucosamine + diphosphate. The protein operates within nucleotide-sugar biosynthesis; UDP-N-acetyl-alpha-D-glucosamine biosynthesis; N-acetyl-alpha-D-glucosamine 1-phosphate from alpha-D-glucosamine 6-phosphate (route II): step 2/2. It participates in nucleotide-sugar biosynthesis; UDP-N-acetyl-alpha-D-glucosamine biosynthesis; UDP-N-acetyl-alpha-D-glucosamine from N-acetyl-alpha-D-glucosamine 1-phosphate: step 1/1. It functions in the pathway bacterial outer membrane biogenesis; LPS lipid A biosynthesis. Catalyzes the last two sequential reactions in the de novo biosynthetic pathway for UDP-N-acetylglucosamine (UDP-GlcNAc). The C-terminal domain catalyzes the transfer of acetyl group from acetyl coenzyme A to glucosamine-1-phosphate (GlcN-1-P) to produce N-acetylglucosamine-1-phosphate (GlcNAc-1-P), which is converted into UDP-GlcNAc by the transfer of uridine 5-monophosphate (from uridine 5-triphosphate), a reaction catalyzed by the N-terminal domain. The chain is Bifunctional protein GlmU from Paracidovorax citrulli (strain AAC00-1) (Acidovorax citrulli).